The sequence spans 141 residues: Regulator of ribonuclease activity B (141 aa).

The segment at 112–141 (GTYFEDPNAPDDEDDNDDLFPPEEDEPRLH) is disordered. Residues 119-141 (NAPDDEDDNDDLFPPEEDEPRLH) show a composition bias toward acidic residues.

It belongs to the RraB family. In terms of assembly, interacts with the C-terminal region of Rne.

The protein resides in the cytoplasm. Functionally, globally modulates RNA abundance by binding to RNase E (Rne) and regulating its endonucleolytic activity. Can modulate Rne action in a substrate-dependent manner by altering the composition of the degradosome. This chain is Regulator of ribonuclease activity B, found in Xenorhabdus nematophila (strain ATCC 19061 / DSM 3370 / CCUG 14189 / LMG 1036 / NCIMB 9965 / AN6).